The primary structure comprises 181 residues: Acireductone dioxygenase (181 aa).

The span at 1-10 (MRAYIYDEES) shows a compositional bias: acidic residues. Residues 1 to 23 (MRAYIYDEESQLSPQDEHESSQS) form a disordered region. Residues His82, His84, Glu88, and His128 each coordinate Fe(2+). Residues His82, His84, Glu88, and His128 each contribute to the Ni(2+) site.

It belongs to the acireductone dioxygenase (ARD) family. Requires Fe(2+) as cofactor. It depends on Ni(2+) as a cofactor.

The protein resides in the cytoplasm. The protein localises to the nucleus. The catalysed reaction is 1,2-dihydroxy-5-(methylsulfanyl)pent-1-en-3-one + O2 = 4-methylsulfanyl-2-oxobutanoate + formate + 2 H(+). It carries out the reaction 1,2-dihydroxy-5-(methylsulfanyl)pent-1-en-3-one + O2 = 3-(methylsulfanyl)propanoate + CO + formate + 2 H(+). The protein operates within amino-acid biosynthesis; L-methionine biosynthesis via salvage pathway; L-methionine from S-methyl-5-thio-alpha-D-ribose 1-phosphate: step 5/6. In terms of biological role, catalyzes 2 different reactions between oxygen and the acireductone 1,2-dihydroxy-3-keto-5-methylthiopentene (DHK-MTPene) depending upon the metal bound in the active site. Fe-containing acireductone dioxygenase (Fe-ARD) produces formate and 2-keto-4-methylthiobutyrate (KMTB), the alpha-ketoacid precursor of methionine in the methionine recycle pathway. Ni-containing acireductone dioxygenase (Ni-ARD) produces methylthiopropionate, carbon monoxide and formate, and does not lie on the methionine recycle pathway. The chain is Acireductone dioxygenase from Puccinia graminis f. sp. tritici (strain CRL 75-36-700-3 / race SCCL) (Black stem rust fungus).